A 513-amino-acid chain; its full sequence is 2-isopropylmalate synthase (513 aa).

Residues 5–268 (LIIFDTTLRD…EVGIDTTQIV (264 aa)) enclose the Pyruvate carboxyltransferase domain. Positions 14, 202, 204, and 239 each coordinate Mn(2+). Residues 394–513 (RLLSLEQQSA…SKNERVAAQG (120 aa)) are regulatory domain.

The protein belongs to the alpha-IPM synthase/homocitrate synthase family. LeuA type 1 subfamily. As to quaternary structure, homodimer. It depends on Mn(2+) as a cofactor.

It is found in the cytoplasm. The enzyme catalyses 3-methyl-2-oxobutanoate + acetyl-CoA + H2O = (2S)-2-isopropylmalate + CoA + H(+). Its pathway is amino-acid biosynthesis; L-leucine biosynthesis; L-leucine from 3-methyl-2-oxobutanoate: step 1/4. In terms of biological role, catalyzes the condensation of the acetyl group of acetyl-CoA with 3-methyl-2-oxobutanoate (2-ketoisovalerate) to form 3-carboxy-3-hydroxy-4-methylpentanoate (2-isopropylmalate). The protein is 2-isopropylmalate synthase of Methylibium petroleiphilum (strain ATCC BAA-1232 / LMG 22953 / PM1).